A 613-amino-acid chain; its full sequence is Secretogranin-2 (613 aa).

Positions 1–27 (MAEAKTHWLGAVLSLIPLIFLLSEAEA) are cleaved as a signal peptide. The propeptide occupies 28–30 (ASF). Disordered regions lie at residues 67-105 (QQAH…DSLS) and 119-146 (QAEN…PMDM). Residues 92 to 105 (ENGDLPESSRDSLS) are compositionally biased toward basic and acidic residues. The residue at position 150 (Tyr150) is a Sulfotyrosine. A phosphoserine mark is found at Ser173, Ser267, Ser428, Ser528, Ser551, and Ser552. The segment covering 257-283 (ESQTQEEVRDSKENADKTEQINDEMKR) has biased composition (basic and acidic residues). The interval 257 to 287 (ESQTQEEVRDSKENADKTEQINDEMKRSGQL) is disordered. Over residues 546-557 (HLSQHSSQETDK) the composition is skewed to basic and acidic residues. The disordered stretch occupies residues 546-580 (HLSQHSSQETDKLASVSKRLPVGTPKSDDTPNRPY).

This sequence belongs to the chromogranin/secretogranin protein family. As to quaternary structure, interacts with Secretogranin III/SCG3. As to expression, highest levels detected in anterior pituitary followed by adrenal medulla and posterior pituitary (at protein level). In the brain, high levels are found in the hypothalamus, comparable to those present in posterior pituitary with two- to six-fold lower levels present in the other brain regions investigated including caudate nucleus, hippocampus, thalamus and brainstem (at protein level).

Its subcellular location is the secreted. Neuroendocrine protein of the granin family that regulates the biogenesis of secretory granules. The sequence is that of Secretogranin-2 (SCG2) from Bos taurus (Bovine).